A 375-amino-acid polypeptide reads, in one-letter code: Response regulator aspartate phosphatase E (375 aa).

The stretch at 24–95 (NVTDAEMLKA…HKKKLDNMRA (72 aa)) forms a coiled coil. TPR repeat units lie at residues 96–129 (YYYN…IPTI), 177–210 (IQCH…AELL), 219–252 (ATAF…YRKI), 258–291 (PQAY…AVDF), 297–330 (MNLF…KGYP), and 333–366 (EELA…QKQI).

Belongs to the Rap family.

The protein resides in the cytoplasm. With respect to regulation, phosphatase activity is inhibited by the phosphatase regulator PhrE. Functionally, involved in the regulation of sporulation. Acts as a phosphatase that specifically dephosphorylates the sporulation initiation phosphotransferase Spo0F and inhibits its activity. Probably plays a dispensable role in the overall context of sporulation initiation. The sequence is that of Response regulator aspartate phosphatase E (rapE) from Bacillus subtilis (strain 168).